The primary structure comprises 158 residues: UPF0262 protein Rsph17025_0594 (158 aa).

The protein belongs to the UPF0262 family.

This Cereibacter sphaeroides (strain ATCC 17025 / ATH 2.4.3) (Rhodobacter sphaeroides) protein is UPF0262 protein Rsph17025_0594.